The chain runs to 504 residues: uncharacterized protein (504 aa).

3 helical membrane passes run 146-166 (TSAG…INIA), 196-216 (SSAA…ADVL), and 330-350 (SMAL…VAVA). 372–492 (FLNIDVPLQA…EIAYGVARTR (121 aa)) serves as a coordination point for a nucleoside 3',5'-cyclic phosphate.

It is found in the cell membrane. This is an uncharacterized protein from Mycobacterium tuberculosis (strain CDC 1551 / Oshkosh).